A 361-amino-acid polypeptide reads, in one-letter code: Peptide chain release factor 1 (361 aa).

Residue Q237 is modified to N5-methylglutamine.

This sequence belongs to the prokaryotic/mitochondrial release factor family. Post-translationally, methylated by PrmC. Methylation increases the termination efficiency of RF1.

Its subcellular location is the cytoplasm. Functionally, peptide chain release factor 1 directs the termination of translation in response to the peptide chain termination codons UAG and UAA. The polypeptide is Peptide chain release factor 1 (Chromohalobacter salexigens (strain ATCC BAA-138 / DSM 3043 / CIP 106854 / NCIMB 13768 / 1H11)).